The sequence spans 131 residues: Profilin-2 (131 aa).

Belongs to the profilin family. As to quaternary structure, occurs in many kinds of cells as a complex with monomeric actin in a 1:1 ratio.

It localises to the cytoplasm. It is found in the cytoskeleton. Its function is as follows. Binds to actin and affects the structure of the cytoskeleton. At high concentrations, profilin prevents the polymerization of actin, whereas it enhances it at low concentrations. By binding to PIP2, it inhibits the formation of IP3 and DG. The protein is Profilin-2 of Lilium longiflorum (Trumpet lily).